We begin with the raw amino-acid sequence, 69 residues long: Beta-defensin 114 (69 aa).

An N-terminal signal peptide occupies residues 1–26 (MRIFYYLHFLCYVTFILPATCTLVNA). 3 disulfides stabilise this stretch: cysteine 29–cysteine 57, cysteine 36–cysteine 50, and cysteine 40–cysteine 58.

The protein belongs to the beta-defensin family. Expressed in epididymis, predominantly in the caput (at protein level).

The protein resides in the secreted. Has a salt-sensitive antimicrobial activity against Gram-negative bacteria, including E.coli, Gram-positive, including S.aureus, and fungi, including C.albicans. Binds to and neutralizes bacterial lipopolysaccharides (LPS), abolishing TNF production by macrophages challenged with LPS. Rescues the LPS-induced reduction of sperm motility in vitro and may protect from LPS-induced lethality. The chain is Beta-defensin 114 (DEFB114) from Homo sapiens (Human).